A 226-amino-acid chain; its full sequence is ATP-dependent dethiobiotin synthetase BioD (226 aa).

Position 12–17 (12–17) interacts with ATP; the sequence is GVGKTV. Residue threonine 16 participates in Mg(2+) binding. Lysine 37 is an active-site residue. Residue threonine 41 coordinates substrate. ATP is bound by residues aspartate 49, 108–111, 169–170, and 197–199; these read EGAG, GS, and PAG. Residues aspartate 49 and glutamate 108 each contribute to the Mg(2+) site.

The protein belongs to the dethiobiotin synthetase family. Homodimer. Mg(2+) serves as cofactor.

The protein resides in the cytoplasm. The enzyme catalyses (7R,8S)-7,8-diammoniononanoate + CO2 + ATP = (4R,5S)-dethiobiotin + ADP + phosphate + 3 H(+). It participates in cofactor biosynthesis; biotin biosynthesis; biotin from 7,8-diaminononanoate: step 1/2. In terms of biological role, catalyzes a mechanistically unusual reaction, the ATP-dependent insertion of CO2 between the N7 and N8 nitrogen atoms of 7,8-diaminopelargonic acid (DAPA, also called 7,8-diammoniononanoate) to form a ureido ring. The sequence is that of ATP-dependent dethiobiotin synthetase BioD from Mycobacterium bovis (strain BCG / Pasteur 1173P2).